The primary structure comprises 100 residues: NADH-quinone oxidoreductase subunit K (100 aa).

A run of 3 helical transmembrane segments spans residues 4–24 (LFHG…SLIV), 28–48 (ILFM…ALVV), and 60–80 (IMYI…LALL).

It belongs to the complex I subunit 4L family. As to quaternary structure, NDH-1 is composed of 13 different subunits. Subunits NuoA, H, J, K, L, M, N constitute the membrane sector of the complex.

The protein localises to the cell membrane. The catalysed reaction is a quinone + NADH + 5 H(+)(in) = a quinol + NAD(+) + 4 H(+)(out). Its function is as follows. NDH-1 shuttles electrons from NADH, via FMN and iron-sulfur (Fe-S) centers, to quinones in the respiratory chain. The immediate electron acceptor for the enzyme in this species is believed to be ubiquinone. Couples the redox reaction to proton translocation (for every two electrons transferred, four hydrogen ions are translocated across the cytoplasmic membrane), and thus conserves the redox energy in a proton gradient. This Buchnera aphidicola subsp. Schizaphis graminum (strain Sg) protein is NADH-quinone oxidoreductase subunit K.